Here is a 109-residue protein sequence, read N- to C-terminus: uncharacterized protein (109 aa).

Residues 12-32 (PNILIKGVYIFVLYGMCICIV) traverse the membrane as a helical segment.

The protein resides in the membrane. This is an uncharacterized protein from Saccharomyces cerevisiae (strain ATCC 204508 / S288c) (Baker's yeast).